Here is a 133-residue protein sequence, read N- to C-terminus: Large ribosomal subunit protein uL14 (133 aa).

Belongs to the universal ribosomal protein uL14 family. Part of the 50S ribosomal subunit. Forms a cluster with proteins L3 and L24e, part of which may contact the 16S rRNA in 2 intersubunit bridges.

Its function is as follows. Binds to 23S rRNA. Forms part of two intersubunit bridges in the 70S ribosome. This Methanopyrus kandleri (strain AV19 / DSM 6324 / JCM 9639 / NBRC 100938) protein is Large ribosomal subunit protein uL14.